Consider the following 342-residue polypeptide: Holliday junction branch migration complex subunit RuvB (342 aa).

Positions 1–179 (MTNILSPEKS…FGIPMRLNFY (179 aa)) are large ATPase domain (RuvB-L). ATP contacts are provided by residues isoleucine 18, arginine 19, glycine 60, lysine 63, threonine 64, threonine 65, 126–128 (EDF), arginine 169, tyrosine 179, and arginine 216. Threonine 64 contacts Mg(2+). Positions 180–250 (NTGELKKVLN…ISDFGLNRLE (71 aa)) are small ATPAse domain (RuvB-S). The head domain (RuvB-H) stretch occupies residues 253-342 (RIGLDSNDYR…HQFNIFNENE (90 aa)). 3 residues coordinate DNA: arginine 289, arginine 308, and arginine 313.

Belongs to the RuvB family. As to quaternary structure, homohexamer. Forms an RuvA(8)-RuvB(12)-Holliday junction (HJ) complex. HJ DNA is sandwiched between 2 RuvA tetramers; dsDNA enters through RuvA and exits via RuvB. An RuvB hexamer assembles on each DNA strand where it exits the tetramer. Each RuvB hexamer is contacted by two RuvA subunits (via domain III) on 2 adjacent RuvB subunits; this complex drives branch migration. In the full resolvosome a probable DNA-RuvA(4)-RuvB(12)-RuvC(2) complex forms which resolves the HJ.

Its subcellular location is the cytoplasm. It catalyses the reaction ATP + H2O = ADP + phosphate + H(+). Its function is as follows. The RuvA-RuvB-RuvC complex processes Holliday junction (HJ) DNA during genetic recombination and DNA repair, while the RuvA-RuvB complex plays an important role in the rescue of blocked DNA replication forks via replication fork reversal (RFR). RuvA specifically binds to HJ cruciform DNA, conferring on it an open structure. The RuvB hexamer acts as an ATP-dependent pump, pulling dsDNA into and through the RuvAB complex. RuvB forms 2 homohexamers on either side of HJ DNA bound by 1 or 2 RuvA tetramers; 4 subunits per hexamer contact DNA at a time. Coordinated motions by a converter formed by DNA-disengaged RuvB subunits stimulates ATP hydrolysis and nucleotide exchange. Immobilization of the converter enables RuvB to convert the ATP-contained energy into a lever motion, pulling 2 nucleotides of DNA out of the RuvA tetramer per ATP hydrolyzed, thus driving DNA branch migration. The RuvB motors rotate together with the DNA substrate, which together with the progressing nucleotide cycle form the mechanistic basis for DNA recombination by continuous HJ branch migration. Branch migration allows RuvC to scan DNA until it finds its consensus sequence, where it cleaves and resolves cruciform DNA. The chain is Holliday junction branch migration complex subunit RuvB from Rickettsia conorii (strain ATCC VR-613 / Malish 7).